A 202-amino-acid chain; its full sequence is MSRYRGPRLRIVRRLGELPGLSRKSPRRAYPPGQHGQARRKRSEYAIRLEEKQKLRLNYGITEKQLVRYVKKARRATGSTGQALLELLEMRLDNTVFRLGMAGTIPGARQLVCHGHITVNGQVVDIPSYQCRPGDIVSVRDRDRSRKLVETNMEFPGLANVPSHLEFDKNTFTGKVNSVIDREWVALQINELLVIEYYSRKA.

Residues L21 to R42 are disordered. Positions M90–N152 constitute an S4 RNA-binding domain.

The protein belongs to the universal ribosomal protein uS4 family. As to quaternary structure, part of the 30S ribosomal subunit. Contacts protein S5. The interaction surface between S4 and S5 is involved in control of translational fidelity.

Functionally, one of the primary rRNA binding proteins, it binds directly to 16S rRNA where it nucleates assembly of the body of the 30S subunit. With S5 and S12 plays an important role in translational accuracy. In Synechocystis sp. (strain ATCC 27184 / PCC 6803 / Kazusa), this protein is Small ribosomal subunit protein uS4.